We begin with the raw amino-acid sequence, 206 residues long: Large ribosomal subunit protein uL4 (206 aa).

Residues 44–77 (RQGTRAQKDRQTVKHSTKKPWRQKGTGRARAGMT) form a disordered region. Basic residues predominate over residues 56-70 (VKHSTKKPWRQKGTG).

The protein belongs to the universal ribosomal protein uL4 family. In terms of assembly, part of the 50S ribosomal subunit.

One of the primary rRNA binding proteins, this protein initially binds near the 5'-end of the 23S rRNA. It is important during the early stages of 50S assembly. It makes multiple contacts with different domains of the 23S rRNA in the assembled 50S subunit and ribosome. Its function is as follows. Forms part of the polypeptide exit tunnel. This is Large ribosomal subunit protein uL4 from Methylibium petroleiphilum (strain ATCC BAA-1232 / LMG 22953 / PM1).